Here is a 330-residue protein sequence, read N- to C-terminus: Carbonic anhydrase (330 aa).

A chloroplast transit peptide-like region spans residues M1 to A109.

It belongs to the beta-class carbonic anhydrase family.

It localises to the cytoplasm. It catalyses the reaction hydrogencarbonate + H(+) = CO2 + H2O. Functionally, reversible hydration of carbon dioxide. The sequence is that of Carbonic anhydrase from Flaveria brownii (Brown's yellowtops).